Here is a 483-residue protein sequence, read N- to C-terminus: Probable Xaa-Pro aminopeptidase MCYG_06503 (483 aa).

Positions 233, 244, 409, and 453 each coordinate Mn(2+).

It belongs to the peptidase M24B family. Mn(2+) serves as cofactor.

The enzyme catalyses Release of any N-terminal amino acid, including proline, that is linked to proline, even from a dipeptide or tripeptide.. Catalyzes the removal of a penultimate prolyl residue from the N-termini of peptides. The sequence is that of Probable Xaa-Pro aminopeptidase MCYG_06503 from Arthroderma otae (strain ATCC MYA-4605 / CBS 113480) (Microsporum canis).